Consider the following 444-residue polypeptide: MAERKYFGTDGVRGKVGTFPITPDFALKLGWAAGKVLASQGSRQVLIGKDTRISGYMLESALEAGLAAAGLSAAFIGPMPTPAVAYLTRTFRAEAGIVISASHNPYYDNGIKFFSAQGTKLPDEIEEAIEAMLEQPIDCVESAELGRASRIKDAAGRYIEFCKGTFPTELSLSGYKIVVDCANGATYHIAPNVMRELGAEVIEIGTSPNGMNINEKCGATDIKALKAKVLETKADVGLAYDGDGDRIMMVDHLGNVVDGDQILFIIAREDLRAGKLKGGVVGTLMSNMSLEISLKTLGIPFIRANVGDRYVLEKMVENDWKLGGENSGHIIIADKNTTGDGIIASLAVLTAMAQHKLSLNELASAVKLFPQVLINVRFSGGTNPLESDAVKAVAAEVEKRLAGKGRILLRKSGTEPLIRVMVECSDAELARKSAEEIVEAVKAN.

Ser-102 acts as the Phosphoserine intermediate in catalysis. Ser-102, Asp-241, Asp-243, and Asp-245 together coordinate Mg(2+). Phosphoserine is present on Ser-102.

Belongs to the phosphohexose mutase family. Mg(2+) serves as cofactor. Post-translationally, activated by phosphorylation.

The catalysed reaction is alpha-D-glucosamine 1-phosphate = D-glucosamine 6-phosphate. In terms of biological role, catalyzes the conversion of glucosamine-6-phosphate to glucosamine-1-phosphate. This chain is Phosphoglucosamine mutase, found in Mannheimia succiniciproducens (strain KCTC 0769BP / MBEL55E).